Here is a 424-residue protein sequence, read N- to C-terminus: UPF0761 membrane protein Smal_0716 (424 aa).

Transmembrane regions (helical) follow at residues 48-68, 101-121, 144-164, 181-201, 216-236, and 251-271; these read VFAL…FPVF, SAGQ…LITL, FLVY…SLAV, WLAD…CITL, AVPG…GIGA, and VAFV…VLLG.

It belongs to the UPF0761 family.

It is found in the cell inner membrane. In Stenotrophomonas maltophilia (strain R551-3), this protein is UPF0761 membrane protein Smal_0716.